The chain runs to 315 residues: Ribosomal RNA small subunit methyltransferase H (315 aa).

S-adenosyl-L-methionine contacts are provided by residues 35 to 37, D55, F79, D101, and Q108; that span reads GGH.

Belongs to the methyltransferase superfamily. RsmH family.

The protein resides in the cytoplasm. The catalysed reaction is cytidine(1402) in 16S rRNA + S-adenosyl-L-methionine = N(4)-methylcytidine(1402) in 16S rRNA + S-adenosyl-L-homocysteine + H(+). In terms of biological role, specifically methylates the N4 position of cytidine in position 1402 (C1402) of 16S rRNA. In Sodalis glossinidius (strain morsitans), this protein is Ribosomal RNA small subunit methyltransferase H.